The chain runs to 291 residues: Small ribosomal subunit protein uS2 (291 aa).

The tract at residues 235-291 is disordered; sequence NLQEDEESGDSGVDPYQDREEEITDYSNYTPKDEASGDDEDEEDNSLVNDEDLYDDK. A compositionally biased stretch (acidic residues) spans 270–291; the sequence is SGDDEDEEDNSLVNDEDLYDDK.

Belongs to the universal ribosomal protein uS2 family.

This Treponema denticola (strain ATCC 35405 / DSM 14222 / CIP 103919 / JCM 8153 / KCTC 15104) protein is Small ribosomal subunit protein uS2.